The sequence spans 493 residues: Glycerol kinase (493 aa).

Position 12 (T12) interacts with ADP. Residues T12, T13, and S14 each contribute to the ATP site. T12 lines the sn-glycerol 3-phosphate pocket. ADP is bound at residue R16. R82, E83, Y132, and D239 together coordinate sn-glycerol 3-phosphate. Glycerol contacts are provided by R82, E83, Y132, D239, and Q240. 2 residues coordinate ADP: T261 and G303. Residues T261, G303, Q307, and G402 each contribute to the ATP site. ADP-binding residues include G402 and N406.

This sequence belongs to the FGGY kinase family.

It catalyses the reaction glycerol + ATP = sn-glycerol 3-phosphate + ADP + H(+). The protein operates within polyol metabolism; glycerol degradation via glycerol kinase pathway; sn-glycerol 3-phosphate from glycerol: step 1/1. Functionally, key enzyme in the regulation of glycerol uptake and metabolism. Catalyzes the phosphorylation of glycerol to yield sn-glycerol 3-phosphate. This Thermococcus gammatolerans (strain DSM 15229 / JCM 11827 / EJ3) protein is Glycerol kinase.